The following is a 190-amino-acid chain: MYVWPCAVVLAQYLWFHRRSLPGKAILEIGAGVSLPGILAAKCGAEVILSDSSELPHCLEVCRQSCQMNNLPHLQVVGLTWGHISWDLLALPPQDIILASDVFFEPEDFEDILATIYFLMHKNPKVQLWSTYQVRSADWSLEALLYKWDMKCVHIPLESFDADKEDIAESTLPGRHTVEMLVISFAKDSL.

The protein belongs to the methyltransferase superfamily. METTL23 family. Interacts with HSPA5, HSP90B1, TUBULIN, UGGT1 and UGGT2. Interacts with TET3. Interacts with STPG4.

It is found in the nucleus. The protein localises to the cytoplasm. It catalyses the reaction L-arginyl-[protein] + 2 S-adenosyl-L-methionine = N(omega),N(omega)-dimethyl-L-arginyl-[protein] + 2 S-adenosyl-L-homocysteine + 2 H(+). Functionally, histone methyltransferase that dimethylates histone H3 at 'Arg-17', forming asymmetric dimethylarginine (H3R17me2a), leading to activate transcription via chromatin remodeling. Maternal factor involved in epigenetic chromatin reprogramming of the paternal genome in the zygote: mediates H3R17me2a, promoting histone H3.3 incorporation in the male pronucleus, leading to TET3 recruitment and subsequent DNA demethylation. The sequence is that of Histone-arginine methyltransferase METTL23 from Homo sapiens (Human).